The primary structure comprises 741 residues: uncharacterized protein (741 aa).

The first 18 residues, 1–18 (MKTISILAFLVLARLIEA), serve as a signal peptide directing secretion. 3 disordered regions span residues 142–300 (PKVE…GNVD), 423–528 (EEDE…SEQG), and 646–681 (ETVA…VEDD). Acidic residues predominate over residues 147-165 (EEEEEEYDGEEDDDDESLT). 2 stretches are compositionally biased toward low complexity: residues 183-197 (VEPS…STTE) and 205-266 (STTV…SSTT). Asparagine 232 and asparagine 241 each carry an N-linked (GlcNAc...) asparagine glycan. Positions 423-432 (EEDEIDETET) are enriched in acidic residues. Residues 433-451 (TESTKTTETTKTTGPAETT) show a composition bias toward low complexity. Residues asparagine 461 and asparagine 511 are each glycosylated (N-linked (GlcNAc...) asparagine). Residues 500–511 (PIDESTESEEPN) are compositionally biased toward acidic residues. The segment covering 512 to 528 (ESVTVTGDTTTDTSEQG) has biased composition (low complexity). A compositionally biased stretch (polar residues) spans 646–656 (ETVAPDTNSPD). Residues 657-671 (ADQEQPDSVEPDNET) show a composition bias toward acidic residues. Asparagine 669 carries N-linked (GlcNAc...) asparagine glycosylation. Asparagine 719 is lipidated: GPI-anchor amidated asparagine. Residues 720–741 (AANLAGSISLSSGVLLLILMLI) constitute a propeptide, removed in mature form.

The protein resides in the cell membrane. This is an uncharacterized protein from Candida albicans (strain SC5314 / ATCC MYA-2876) (Yeast).